A 95-amino-acid chain; its full sequence is MHGQVATIKDIVLEERPEVVDLHCNEQLLDSSESEEEDSVREQLVEQAQQAYRVVTTCGICKCPVRLVVQCGDADLKVLHELLLGDLSIVCPGCA.

The segment at 1-42 (MHGQVATIKDIVLEERPEVVDLHCNEQLLDSSESEEEDSVRE) is E7 terminal domain. Positions 22 to 26 (LHCNE) match the LXCXE motif; interaction with host RB1 and TMEM173/STING motif. A zinc finger lies at 58–94 (CGICKCPVRLVVQCGDADLKVLHELLLGDLSIVCPGC). The short motif at 76–84 (LKVLHELLL) is the Nuclear export signal element.

It belongs to the papillomaviridae E7 protein family. In terms of assembly, homodimer. Homooligomer. Interacts with host RB1; this interaction induces dissociation of RB1-E2F1 complex thereby disrupting RB1 activity. Interacts with host EP300; this interaction represses EP300 transcriptional activity. Interacts with protein E2; this interaction inhibits E7 oncogenic activity. Interacts with host TMEM173/STING; this interaction impairs the ability of TMEM173/STING to sense cytosolic DNA and promote the production of type I interferon (IFN-alpha and IFN-beta). Post-translationally, highly phosphorylated.

The protein resides in the host cytoplasm. It is found in the host nucleus. Plays a role in viral genome replication by driving entry of quiescent cells into the cell cycle. Stimulation of progression from G1 to S phase allows the virus to efficiently use the cellular DNA replicating machinery to achieve viral genome replication. E7 protein has both transforming and trans-activating activities. Induces the disassembly of the E2F1 transcription factor from RB1, with subsequent transcriptional activation of E2F1-regulated S-phase genes. Interferes with host histone deacetylation mediated by HDAC1 and HDAC2, leading to transcription activation. Also plays a role in the inhibition of both antiviral and antiproliferative functions of host interferon alpha. Interaction with host TMEM173/STING impairs the ability of TMEM173/STING to sense cytosolic DNA and promote the production of type I interferon (IFN-alpha and IFN-beta). This is Protein E7 from Human papillomavirus type 61.